The chain runs to 255 residues: Na(+)-translocating NADH-quinone reductase subunit C (255 aa).

The chain crosses the membrane as a helical span at residues 11–31; sequence LGVVVGLSLVCSIIVSTAAVG. Thr-223 bears the FMN phosphoryl threonine mark.

It belongs to the NqrC family. Composed of six subunits; NqrA, NqrB, NqrC, NqrD, NqrE and NqrF. The cofactor is FMN.

The protein localises to the cell inner membrane. It carries out the reaction a ubiquinone + n Na(+)(in) + NADH + H(+) = a ubiquinol + n Na(+)(out) + NAD(+). Functionally, NQR complex catalyzes the reduction of ubiquinone-1 to ubiquinol by two successive reactions, coupled with the transport of Na(+) ions from the cytoplasm to the periplasm. NqrA to NqrE are probably involved in the second step, the conversion of ubisemiquinone to ubiquinol. The polypeptide is Na(+)-translocating NADH-quinone reductase subunit C (Vibrio vulnificus (strain CMCP6)).